Consider the following 454-residue polypeptide: tRNA modification GTPase MnmE (454 aa).

(6S)-5-formyl-5,6,7,8-tetrahydrofolate-binding residues include Arg23, Glu80, and Lys120. A TrmE-type G domain is found at 216 to 377; the sequence is GMKVVIAGRP…LRDHLKQSMG (162 aa). Asn226 lines the K(+) pocket. GTP contacts are provided by residues 226–231, 245–251, 270–273, 335–338, and 358–360; these read NAGKSS, TDIAGTT, DTAG, NKAD, and SAR. Ser230 contributes to the Mg(2+) binding site. The K(+) site is built by Thr245, Ile247, and Thr250. Thr251 contributes to the Mg(2+) binding site. Residue Lys454 participates in (6S)-5-formyl-5,6,7,8-tetrahydrofolate binding.

The protein belongs to the TRAFAC class TrmE-Era-EngA-EngB-Septin-like GTPase superfamily. TrmE GTPase family. In terms of assembly, homodimer. Heterotetramer of two MnmE and two MnmG subunits. It depends on K(+) as a cofactor.

Its subcellular location is the cytoplasm. Functionally, exhibits a very high intrinsic GTPase hydrolysis rate. Involved in the addition of a carboxymethylaminomethyl (cmnm) group at the wobble position (U34) of certain tRNAs, forming tRNA-cmnm(5)s(2)U34. The chain is tRNA modification GTPase MnmE from Yersinia pestis.